A 503-amino-acid polypeptide reads, in one-letter code: MRPVLVVDFGSQYSQLVVRAIRECGYYAEFASPSISAAECLALSPIAIFLSGGPASAYKDNAPKLDEEILNCGIPVFGICYGFQLLAQAFGGSVKKANAPEYGPADITIVNKAFFSGQPDRQTVWMSHGDSVIRAPKNFCILSTSQDAVLSFCNRDRTIAGVQWHPEVKHSRFGKHTIKAFLSSFAAPNWDPEQTICGTVDSIRKTVGCKRVLCALSGGVDSVVAATLTHRAIGDRLRCVFVDHGLLRLNEREQVEEYCSSLGLNVSTYDASDCFLSALSGIRDSEQKRKVIGREFIACFSKLQERFDIKPHFLLQGTLYPDLVESGATPGGATIKSHHNVGGLSDNLGFELLEPLKYLFKDEVRKIGLQLGIPKHIVHRQPFPGPGLAIRIIGEVTNKKLSILRAADAIVRHELRDWTDIWQCPVILLSDVQSVGVRGDSRSCGFPIVIRPVSSDDAMTADWYRLPYDVLARISGRITNEIPEIVRVVLDITPKPPATIEWE.

The region spanning 3 to 189 is the Glutamine amidotransferase type-1 domain; that stretch reads PVLVVDFGSQ…AFLSSFAAPN (187 aa). Catalysis depends on Cys-80, which acts as the Nucleophile. Active-site residues include His-165 and Glu-167. Residues 190–380 form the GMPS ATP-PPase domain; it reads WDPEQTICGT…LGIPKHIVHR (191 aa). An ATP-binding site is contributed by 217-223; the sequence is SGGVDSV.

As to quaternary structure, homodimer.

The enzyme catalyses XMP + L-glutamine + ATP + H2O = GMP + L-glutamate + AMP + diphosphate + 2 H(+). It functions in the pathway purine metabolism; GMP biosynthesis; GMP from XMP (L-Gln route): step 1/1. In terms of biological role, catalyzes the synthesis of GMP from XMP. This is GMP synthase [glutamine-hydrolyzing] from Tropheryma whipplei (strain Twist) (Whipple's bacillus).